Consider the following 195-residue polypeptide: Protein GrpE (195 aa).

Positions 1–24 are enriched in polar residues; that stretch reads MSSKEQNTPDEQVSQESEMEQGQQ. The tract at residues 1-40 is disordered; sequence MSSKEQNTPDEQVSQESEMEQGQQAEAAPETVDVVDPRDE.

It belongs to the GrpE family. In terms of assembly, homodimer.

The protein localises to the cytoplasm. Participates actively in the response to hyperosmotic and heat shock by preventing the aggregation of stress-denatured proteins, in association with DnaK and GrpE. It is the nucleotide exchange factor for DnaK and may function as a thermosensor. Unfolded proteins bind initially to DnaJ; upon interaction with the DnaJ-bound protein, DnaK hydrolyzes its bound ATP, resulting in the formation of a stable complex. GrpE releases ADP from DnaK; ATP binding to DnaK triggers the release of the substrate protein, thus completing the reaction cycle. Several rounds of ATP-dependent interactions between DnaJ, DnaK and GrpE are required for fully efficient folding. This is Protein GrpE from Sodalis glossinidius (strain morsitans).